The primary structure comprises 331 residues: ADP,ATP carrier protein 2, mitochondrial (331 aa).

Solcar repeat units lie at residues 29–122 (KNFA…FKRM), 134–226 (KWFG…LKPV), and 238–320 (ASFA…LQIL). 5 helical membrane passes run 31–58 (FAID…VKLL), 99–123 (TANV…KRMF), 132–152 (YWKW…SSLF), 202–223 (FNIS…YDSL), and 237–257 (FASF…SYPI). Arginine 104 and lysine 116 together coordinate ADP. Arginine 261 contributes to the ADP binding site. The segment at 261–266 (RRRMMM) is important for transport activity. The Nucleotide carrier signature motif motif lies at 261–266 (RRRMMM). The chain crosses the membrane as a helical span at residues 297–317 (AGANILRAIAGAGVLSGYDQL).

The protein belongs to the mitochondrial carrier (TC 2.A.29) family. As to quaternary structure, monomer.

The protein localises to the mitochondrion inner membrane. It catalyses the reaction ADP(in) + ATP(out) = ADP(out) + ATP(in). The matrix-open state (m-state) is inhibited by the membrane-permeable bongkrekic acid (BKA). The cytoplasmic-open state (c-state) is inhibited by the membrane-impermeable toxic inhibitor carboxyatractyloside (CATR). Functionally, ADP:ATP antiporter that mediates import of ADP into the mitochondrial matrix for ATP synthesis, and export of ATP out to fuel the cell. Cycles between the cytoplasmic-open state (c-state) and the matrix-open state (m-state): operates by the alternating access mechanism with a single substrate-binding site intermittently exposed to either the cytosolic (c-state) or matrix (m-state) side of the inner mitochondrial membrane. This Triticum aestivum (Wheat) protein is ADP,ATP carrier protein 2, mitochondrial (ANT-G2).